The sequence spans 581 residues: Estrogen receptor (581 aa).

Positions 1–144 are modulating; sequence MYPEDSRGSG…GFEIAKEMRF (144 aa). 2 disordered regions span residues 45-66 and 96-122; these read APLD…SGPN and PVYR…DDSY. Residues 56–66 are compositionally biased toward polar residues; it reads GSLQSLGSGPN. Residues 100–109 are compositionally biased toward low complexity; the sequence is SSVPSSQQSV. 2 consecutive NR C4-type zinc fingers follow at residues 145 to 165 and 181 to 205; these read CAVC…CEGC and CPAT…LRKC. The segment at residues 145–210 is a DNA-binding region (nuclear receptor); the sequence is CAVCSDYASG…RLRKCYEVGM (66 aa). The interval 211 to 272 is hinge; that stretch reads MKGGMRKDRG…GGGKSSMISM (62 aa). Residues 216 to 246 are compositionally biased toward basic and acidic residues; the sequence is RKDRGRVLRRDKQRTGTSDRDKASKGLEHRT. The interval 216–268 is disordered; it reads RKDRGRVLRRDKQRTGTSDRDKASKGLEHRTAPPQDRRKHISSSAGGGGGKSS. An NR LBD domain is found at 273-509; the sequence is PPDQVLLLLQ…DLLLEMLDAH (237 aa). The segment covering 516-528 has biased composition (basic and acidic residues); that stretch reads RPAETWSQADREP. The tract at residues 516 to 581 is disordered; the sequence is RPAETWSQAD…GSRSECTHIL (66 aa). Residues 536–547 show a composition bias toward gly residues; that stretch reads SGGGGGGGGGSS.

The protein belongs to the nuclear hormone receptor family. NR3 subfamily. As to quaternary structure, binds DNA as a homodimer. Can form a heterodimer with ER-beta.

It localises to the nucleus. The steroid hormones and their receptors are involved in the regulation of eukaryotic gene expression and affect cellular proliferation and differentiation in target tissues. In Pagrus major (Red sea bream), this protein is Estrogen receptor (esr1).